Here is a 631-residue protein sequence, read N- to C-terminus: Altered inheritance of mitochondria protein 9, mitochondrial (631 aa).

The transit peptide at 1 to 41 (MLSRVVRQRSRSAISSFKLRAHAAFAETRIGVGISVQATRL) directs the protein to the mitochondrion.

It belongs to the AIM9 family.

It is found in the mitochondrion. The chain is Altered inheritance of mitochondria protein 9, mitochondrial (AIM9) from Scheffersomyces stipitis (strain ATCC 58785 / CBS 6054 / NBRC 10063 / NRRL Y-11545) (Yeast).